A 415-amino-acid polypeptide reads, in one-letter code: Leucine-rich repeat-containing protein 34 (415 aa).

LRR repeat units lie at residues 246–272 (SLRY…LKSN) and 274–296 (TLEV…LSET).

Interacts with NPM1 and NCL. Expressed in testis where it specifically localizes to germ cells (at protein level). Not detected in other tissues tested (at protein level). Expressed in pluripotent embryonic stem cells and multipotent adult germline stem cells.

It localises to the nucleus. It is found in the nucleolus. The protein resides in the cytoplasm. Highly expressed in stem cells where it may be involved in regulation of pluripotency. In embryonic stem cells (ESCs), important for normal expression of the pluripotency regulators POU5F1/OCT4 and KLF4. Also important for expression of the ectodermal marker gene NES and the endodermal marker gene GATA4. Promotes stem cell proliferation in vitro. The sequence is that of Leucine-rich repeat-containing protein 34 from Mus musculus (Mouse).